We begin with the raw amino-acid sequence, 280 residues long: Thymidylate synthase (280 aa).

Position 21 (Arg21) interacts with dUMP. His51 contacts (6R)-5,10-methylene-5,6,7,8-tetrahydrofolate. 142 to 143 (RR) provides a ligand contact to dUMP. The active-site Nucleophile is Cys162. DUMP contacts are provided by residues 182–185 (RSAD), Asn193, and 223–225 (HLY). Residue Asp185 participates in (6R)-5,10-methylene-5,6,7,8-tetrahydrofolate binding. Residue Ala279 participates in (6R)-5,10-methylene-5,6,7,8-tetrahydrofolate binding.

The protein belongs to the thymidylate synthase family. Bacterial-type ThyA subfamily. Homodimer.

It localises to the cytoplasm. It carries out the reaction dUMP + (6R)-5,10-methylene-5,6,7,8-tetrahydrofolate = 7,8-dihydrofolate + dTMP. It participates in pyrimidine metabolism; dTTP biosynthesis. Functionally, catalyzes the reductive methylation of 2'-deoxyuridine-5'-monophosphate (dUMP) to 2'-deoxythymidine-5'-monophosphate (dTMP) while utilizing 5,10-methylenetetrahydrofolate (mTHF) as the methyl donor and reductant in the reaction, yielding dihydrofolate (DHF) as a by-product. This enzymatic reaction provides an intracellular de novo source of dTMP, an essential precursor for DNA biosynthesis. The chain is Thymidylate synthase from Acinetobacter baylyi (strain ATCC 33305 / BD413 / ADP1).